The sequence spans 214 residues: 3,4-dihydroxy-2-butanone 4-phosphate synthase (214 aa).

Residues Arg37 to Glu38, Asp42, Arg150 to Thr154, and Glu174 contribute to the D-ribulose 5-phosphate site. Glu38 contacts Mg(2+). His153 contributes to the Mg(2+) binding site.

It belongs to the DHBP synthase family. As to quaternary structure, homodimer. The cofactor is Mg(2+). Requires Mn(2+) as cofactor.

The enzyme catalyses D-ribulose 5-phosphate = (2S)-2-hydroxy-3-oxobutyl phosphate + formate + H(+). It functions in the pathway cofactor biosynthesis; riboflavin biosynthesis; 2-hydroxy-3-oxobutyl phosphate from D-ribulose 5-phosphate: step 1/1. Functionally, catalyzes the conversion of D-ribulose 5-phosphate to formate and 3,4-dihydroxy-2-butanone 4-phosphate. In Nitratidesulfovibrio vulgaris (strain DP4) (Desulfovibrio vulgaris), this protein is 3,4-dihydroxy-2-butanone 4-phosphate synthase.